Consider the following 548-residue polypeptide: Tylosin resistance ATP-binding protein TlrC (548 aa).

ABC transporter domains are found at residues 9–265 (LSLH…RRRQ) and 347–547 (IATA…VSGA). ATP contacts are provided by residues 41–48 (GDNGAGKS) and 387–394 (GPNGAGKS).

Belongs to the ABC transporter superfamily.

It localises to the cell membrane. Responsible for tylosin resistance, and is proposed to be a subunit of a multicomponent export system for the energy-dependent efflux of tylosin. The protein is Tylosin resistance ATP-binding protein TlrC (tlrC) of Streptomyces fradiae (Streptomyces roseoflavus).